A 320-amino-acid chain; its full sequence is cUMP-AMP-activated phospholipase (320 aa).

The 182-residue stretch at 23-204 (LALDGGGAKG…CANNPTLFAI (182 aa)) folds into the PNPLA domain. The GXGXXG signature appears at 27–32 (GGGAKG). Positions 59-63 (GTSTG) match the GXSXG motif. Residue S61 is the Nucleophile of the active site. D191 serves as the catalytic Proton acceptor. The DGA/G motif lies at 191–193 (DGG).

The protein belongs to the patatin family.

It catalyses the reaction a 1,2-diacyl-sn-glycero-3-phosphocholine + H2O = a 2-acyl-sn-glycero-3-phosphocholine + a fatty acid + H(+). Its activity is regulated as follows. Phospholipase activity is specifically activated upon 3',3'-cUAMP binding. Is not activated by the other cyclic dinucleotides 3',3'-cGAMP, 3',3'-c-diAMP and 3',3'-c-diGMP. Therefore, is specifically activated by only the nucleotide synthesized from its adjacently encoded nucleotidyltransferase (CdnE). Functionally, effector phospholipase of a CBASS antivirus system. CBASS (cyclic oligonucleotide-based antiphage signaling system) provides immunity against bacteriophage. The CD-NTase protein synthesizes cyclic nucleotides in response to infection; these serve as specific second messenger signals. The signals activate a diverse range of effectors, leading to bacterial cell death and thus abortive phage infection. A type II-A(UA) CBASS system. Phospholipase that is activated upon binding to the cyclic dinucleotide (CDN) second messenger 3',3'-cyclic UMP-AMP (3',3'-cUAMP). This Escherichia coli protein is cUMP-AMP-activated phospholipase.